The primary structure comprises 876 residues: Alanine--tRNA ligase (876 aa).

Residues H564, H568, C666, and H670 each contribute to the Zn(2+) site.

The protein belongs to the class-II aminoacyl-tRNA synthetase family. It depends on Zn(2+) as a cofactor.

The protein resides in the cytoplasm. It catalyses the reaction tRNA(Ala) + L-alanine + ATP = L-alanyl-tRNA(Ala) + AMP + diphosphate. In terms of biological role, catalyzes the attachment of alanine to tRNA(Ala) in a two-step reaction: alanine is first activated by ATP to form Ala-AMP and then transferred to the acceptor end of tRNA(Ala). Also edits incorrectly charged Ser-tRNA(Ala) and Gly-tRNA(Ala) via its editing domain. The protein is Alanine--tRNA ligase of Porphyromonas gingivalis (strain ATCC BAA-308 / W83).